Consider the following 481-residue polypeptide: 3-isopropylmalate dehydratase large subunit (481 aa).

Residues cysteine 357, cysteine 417, and cysteine 420 each contribute to the [4Fe-4S] cluster site.

It belongs to the aconitase/IPM isomerase family. LeuC type 1 subfamily. In terms of assembly, heterodimer of LeuC and LeuD. Requires [4Fe-4S] cluster as cofactor.

It catalyses the reaction (2R,3S)-3-isopropylmalate = (2S)-2-isopropylmalate. It participates in amino-acid biosynthesis; L-leucine biosynthesis; L-leucine from 3-methyl-2-oxobutanoate: step 2/4. Its function is as follows. Catalyzes the isomerization between 2-isopropylmalate and 3-isopropylmalate, via the formation of 2-isopropylmaleate. The polypeptide is 3-isopropylmalate dehydratase large subunit (Maricaulis maris (strain MCS10) (Caulobacter maris)).